We begin with the raw amino-acid sequence, 212 residues long: Ion-translocating oxidoreductase complex subunit G (212 aa).

A helical transmembrane segment spans residues 9–29 (GLLLGLFALLCTGLVAIVNQL). The residue at position 176 (Thr-176) is an FMN phosphoryl threonine.

This sequence belongs to the RnfG family. In terms of assembly, the complex is composed of six subunits: RnfA, RnfB, RnfC, RnfD, RnfE and RnfG. The cofactor is FMN.

It is found in the cell inner membrane. Its function is as follows. Part of a membrane-bound complex that couples electron transfer with translocation of ions across the membrane. This Shewanella piezotolerans (strain WP3 / JCM 13877) protein is Ion-translocating oxidoreductase complex subunit G.